Consider the following 73-residue polypeptide: Plasticin-A1 (73 aa).

An N-terminal signal peptide occupies residues 1–22 (MAFLKKSLFLVLFLAIVPLSIC). A propeptide spanning residues 23–42 (EEEKREEENEEKQEDDDQSE) is cleaved from the precursor. Positions 25–45 (EKREEENEEKQEDDDQSEKRG) are disordered. Residues 30-40 (ENEEKQEDDDQ) show a composition bias toward acidic residues. Glycine 70 is subject to Glycine amide. Residues 72–73 (ES) constitute a propeptide that is removed on maturation.

It belongs to the frog skin active peptide (FSAP) family. Plasticin subfamily. In terms of tissue distribution, expressed by the skin glands.

The protein localises to the secreted. Its subcellular location is the target cell membrane. Its function is as follows. Peptide with no antimicrobial activity. May act in synergy with cationic peptides by enhancing their activity. Has a moderate hemolytic activity. The protein is Plasticin-A1 of Agalychnis annae (Blue-sided leaf frog).